Reading from the N-terminus, the 65-residue chain is Toxin CsEM1 (65 aa).

The LCN-type CS-alpha/beta domain occupies Lys-1–Asn-65. 4 disulfide bridges follow: Cys-12–Cys-64, Cys-16–Cys-40, Cys-25–Cys-45, and Cys-29–Cys-47.

This sequence belongs to the long (4 C-C) scorpion toxin superfamily. Sodium channel inhibitor family. Beta subfamily. Expressed by the venom gland.

It localises to the secreted. Functionally, beta toxins bind voltage-independently at site-4 of sodium channels (Nav) and shift the voltage of activation toward more negative potentials thereby affecting sodium channel activation and promoting spontaneous and repetitive firing. Highly potent. This chain is Toxin CsEM1, found in Centruroides sculpturatus (Arizona bark scorpion).